We begin with the raw amino-acid sequence, 671 residues long: Leucine zipper putative tumor suppressor 2 (671 aa).

Disordered regions lie at residues 1 to 131 and 149 to 324; these read MAIV…IPVS and KPVL…SDEA. The segment at 1–333 is required for centrosomal localization; the sequence is MAIVHTLPVP…ALLHCVLEGK (333 aa). The span at 187-199 shows a compositional bias: low complexity; sequence ASSSSSSSSSSAA. Residues 213 to 241 are compositionally biased toward polar residues; the sequence is PSGTLSDSGRNSLSSLPTYSTGGAEPTTN. Residues 242–283 are compositionally biased toward low complexity; the sequence is SPGGHLPSHGPGRGALPGPARGVPTGPSHSDSGRSSSSKSTG. Residue S249 is modified to Phosphoserine. Residues 284–295 are compositionally biased toward gly residues; the sequence is SLGGRVAGGLLG. S296 carries the post-translational modification Phosphoserine. Over residues 296-310 the composition is skewed to low complexity; the sequence is SGARASPGSSSGGDR. The segment covering 311 to 321 has biased composition (pro residues); it reads SPPPPPPPPPS. Residues 329–651 adopt a coiled-coil conformation; it reads VLEGKLRDRE…LELEARELAD (323 aa). A sufficient for interaction with CTNNB1 region spans residues 449 to 671; sequence SGEISLLKQQ…CLEEITATEI (223 aa). Residues 452-671 form a sufficient for interaction with KATNB1 and for inhibition of katanin-mediated microtubule severing region; that stretch reads ISLLKQQLKE…CLEEITATEI (220 aa). Residue S572 is modified to Phosphoserine. The Nuclear export signal motif lies at 633-642; that stretch reads LEQELQQLSL.

Belongs to the LZTS2 family. In terms of assembly, interacts with KATNB1. Also interacts with CTNNB1, gamma-tubulin and KIF23.

The protein localises to the cytoplasm. The protein resides in the cytoskeleton. It is found in the microtubule organizing center. Its subcellular location is the centrosome. Functionally, negative regulator of katanin-mediated microtubule severing and release from the centrosome. Required for central spindle formation and the completion of cytokinesis. May negatively regulate axonal outgrowth by preventing the formation of microtubule bundles that are necessary for transport within the elongating axon. Negative regulator of the Wnt signaling pathway. Represses beta-catenin-mediated transcriptional activation by promoting the nuclear exclusion of beta-catenin. In Mus musculus (Mouse), this protein is Leucine zipper putative tumor suppressor 2 (Lzts2).